We begin with the raw amino-acid sequence, 221 residues long: Deoxyribose-phosphate aldolase (221 aa).

The active-site Proton donor/acceptor is Asp89. Residue Lys151 is the Schiff-base intermediate with acetaldehyde of the active site. The active-site Proton donor/acceptor is Lys180.

It belongs to the DeoC/FbaB aldolase family. DeoC type 1 subfamily.

It localises to the cytoplasm. The enzyme catalyses 2-deoxy-D-ribose 5-phosphate = D-glyceraldehyde 3-phosphate + acetaldehyde. The protein operates within carbohydrate degradation; 2-deoxy-D-ribose 1-phosphate degradation; D-glyceraldehyde 3-phosphate and acetaldehyde from 2-deoxy-alpha-D-ribose 1-phosphate: step 2/2. Catalyzes a reversible aldol reaction between acetaldehyde and D-glyceraldehyde 3-phosphate to generate 2-deoxy-D-ribose 5-phosphate. The chain is Deoxyribose-phosphate aldolase from Mesomycoplasma hyopneumoniae (strain J / ATCC 25934 / NCTC 10110) (Mycoplasma hyopneumoniae).